The primary structure comprises 161 residues: Nucleoside diphosphate kinase (161 aa).

Residues K12, F60, R88, T94, and R105 each coordinate ATP. H121 functions as the Pros-phosphohistidine intermediate in the catalytic mechanism.

The protein belongs to the NDK family. Requires Mg(2+) as cofactor.

It is found in the cytoplasm. It catalyses the reaction a 2'-deoxyribonucleoside 5'-diphosphate + ATP = a 2'-deoxyribonucleoside 5'-triphosphate + ADP. The catalysed reaction is a ribonucleoside 5'-diphosphate + ATP = a ribonucleoside 5'-triphosphate + ADP. Its function is as follows. Major role in the synthesis of nucleoside triphosphates other than ATP. The ATP gamma phosphate is transferred to the NDP beta phosphate via a ping-pong mechanism, using a phosphorylated active-site intermediate. The chain is Nucleoside diphosphate kinase from Pyrococcus furiosus (strain ATCC 43587 / DSM 3638 / JCM 8422 / Vc1).